A 167-amino-acid polypeptide reads, in one-letter code: Dihydrofolate reductase (167 aa).

The region spanning 1–162 is the DHFR domain; that stretch reads MFISMWAQDK…YPHRFQKWQK (162 aa). NADP(+)-binding positions include Ala-7 and 13–19; that span reads LIGKDGL. Asp-27 is a binding site for substrate. 45–46 serves as a coordination point for NADP(+); sequence KT. A substrate-binding site is contributed by Arg-58. Residues 64 to 65 and 99 to 106 each bind NADP(+); these read TT and GGSRIFQA. Substrate is bound at residue Thr-117.

This sequence belongs to the dihydrofolate reductase family.

It carries out the reaction (6S)-5,6,7,8-tetrahydrofolate + NADP(+) = 7,8-dihydrofolate + NADPH + H(+). The protein operates within cofactor biosynthesis; tetrahydrofolate biosynthesis; 5,6,7,8-tetrahydrofolate from 7,8-dihydrofolate: step 1/1. In terms of biological role, key enzyme in folate metabolism. Catalyzes an essential reaction for de novo glycine and purine synthesis, and for DNA precursor synthesis. The polypeptide is Dihydrofolate reductase (folA) (Enterococcus faecium (Streptococcus faecium)).